A 394-amino-acid chain; its full sequence is Guanine nucleotide-binding protein G(s) subunit alpha isoforms short (394 aa).

Residues methionine 1–asparagine 23 form a disordered region. Glycine 2 carries the N-palmitoyl glycine lipid modification. A lipid anchor (S-palmitoyl cysteine) is attached at cysteine 3. Positions lysine 8 to asparagine 23 are enriched in basic and acidic residues. One can recognise a G-alpha domain in the interval alanine 39–leucine 394. The tract at residues arginine 42–threonine 55 is G1 motif. GTP is bound at residue glycine 47 to threonine 55. A Mg(2+)-binding site is contributed by serine 54. Positions phenylalanine 68 to lysine 91 are disordered. The segment at aspartate 196–threonine 204 is G2 motif. GTP is bound by residues leucine 197–threonine 204, aspartate 223–glutamine 227, and asparagine 292–aspartate 295. Position 204 (threonine 204) interacts with Mg(2+). A G3 motif region spans residues phenylalanine 219 to arginine 228. Residues isoleucine 288–aspartate 295 form a G4 motif region. A Glycyl lysine isopeptide (Lys-Gly) (interchain with G-Cter in ubiquitin) cross-link involves residue lysine 300. Phosphoserine is present on serine 352. The segment at threonine 364–threonine 369 is G5 motif. Position 366 (alanine 366) interacts with GTP.

Belongs to the G-alpha family. G(s) subfamily. Heterotrimeric G proteins are composed of 3 units; alpha, beta and gamma. The alpha chain contains the guanine nucleotide binding site. Component of the TAS2R14-GNAS2 complex, consisting of TAS2R14, GNAS2, GNB1 and GNG2; within the complex interacts with TAS2R14; this complex plays a role in the perception of bitterness. Interacts with CRY1; the interaction may block GPCR-mediated regulation of cAMP concentrations. Interacts with ADCY6 and stimulates its adenylyl cyclase activity. Interacts with ADCY2 and ADCY5. Stimulates the ADCY5 adenylyl cyclase activity. Interacts (GDP-bound form) with RIC8B; promoting GNAS folding and association with the plasma membrane. Interaction with SASH1. Interacts with GASL2L2.

Its subcellular location is the cell membrane. The enzyme catalyses GTP + H2O = GDP + phosphate + H(+). In terms of biological role, guanine nucleotide-binding proteins (G proteins) function as transducers in numerous signaling pathways controlled by G protein-coupled receptors (GPCRs). The alpha chain contains the guanine nucleotide binding site and alternates between an active, GTP-bound state and an inactive, GDP-bound state. Signaling by an activated GPCR promotes GDP release and GTP binding. The alpha subunit has a low GTPase activity that converts bound GTP to GDP, thereby terminating the signal. Both GDP release and GTP hydrolysis are modulated by numerous regulatory proteins. Signaling involves the activation of adenylyl cyclases, resulting in increased levels of the signaling molecule cAMP. Functions downstream of beta-adrenergic receptors. Stimulates the Ras signaling pathway via RAPGEF2. The polypeptide is Guanine nucleotide-binding protein G(s) subunit alpha isoforms short (GNAS) (Bos taurus (Bovine)).